Reading from the N-terminus, the 132-residue chain is Interleukin-13 (132 aa).

The first 18 residues, 1 to 18, serve as a signal peptide directing secretion; it reads MALLLTTVIALTCLGGFA. 4 N-linked (GlcNAc...) asparagine glycosylation sites follow: Asn-38, Asn-49, Asn-57, and Asn-72. Intrachain disulfides connect Cys-48–Cys-76 and Cys-64–Cys-90.

It belongs to the IL-4/IL-13 family. In terms of assembly, interacts with IL13RA2.

It localises to the secreted. Functionally, cytokine that plays important roles in allergic inflammation and immune response to parasite infection. Synergizes with IL2 in regulating interferon-gamma synthesis. Stimulates B-cell proliferation, and activation of eosinophils, basophils, and mast cells. Plays an important role in controlling IL33 activity by modulating the production of transmembrane and soluble forms of interleukin-1 receptor-like 1/IL1RL1. Displays the capacity to antagonize Th1-driven proinflammatory immune response and downregulates synthesis of many proinflammatory cytokines including IL1, IL6, IL10, IL12 and TNF-alpha through a mechanism that partially involves suppression of NF-kappa-B. Also functions on nonhematopoietic cells, including endothelial cells where it induces vascular cell adhesion protein 1/VCAM1, which is important in the recruitment of eosinophils. Exerts its biological effects through its receptors which comprises the IL4R chain and the IL13RA1 chain, to activate JAK1 and TYK2, leading to the activation of STAT6. Aside from IL13RA1, another receptor IL13RA2 acts as a high affinity decoy for IL13 and mediates internalization and depletion of extracellular IL13. The sequence is that of Interleukin-13 (IL13) from Pan troglodytes (Chimpanzee).